Reading from the N-terminus, the 373-residue chain is MKKYLLSLLAAVTYTTAQSVSGSAEGFASGVTGGGGATPVYPADTAELESLLSSEGEQVIVLTKTYDFTGTSATGTACYSWGTGEGCQLILQDDCGDTPSTTVTYDAAGKTPIPVASDKTLLGVGSEGVIKGKGLSFTDNVSNIIVQNIKITELNPEYVWGGDALTFDGSSNICIDHVETSLIGRVHYVFGYNPNSGITLSNNFINGETTYSTSCDGYQYWGLELVGKNDSITFKGNYLYKTSGRSPALSGSTKFHACNNVWSDNNGHAIEGNEKGQGLFEGNVFQEVATVVSSTFWEAGDLFLSSADGTGNDACASYIGRNCASSIYMNDGGDYTSYTDVSWLGDWSGLTIAECAEAREIEGTVPTSAGNTL.

The signal sequence occupies residues 1–17; it reads MKKYLLSLLAAVTYTTA. Disulfide bonds link Cys78–Cys95 and Cys87–Cys215. Asn140 and Asn229 each carry an N-linked (GlcNAc...) asparagine glycan. Arg245 is an active-site residue. Cys315 and Cys323 are disulfide-bonded.

Belongs to the polysaccharide lyase 1 family.

It is found in the secreted. It catalyses the reaction Eliminative cleavage of (1-&gt;4)-alpha-D-galacturonan methyl ester to give oligosaccharides with 4-deoxy-6-O-methyl-alpha-D-galact-4-enuronosyl groups at their non-reducing ends.. Functionally, pectinolytic enzymes consist of four classes of enzymes: pectin lyase, polygalacturonase, pectin methylesterase and rhamnogalacturonase. Among pectinolytic enzymes, pectin lyase is the most important in depolymerization of pectin, since it cleaves internal glycosidic bonds of highly methylated pectins. The polypeptide is Probable pectin lyase C (pelC) (Emericella nidulans (strain FGSC A4 / ATCC 38163 / CBS 112.46 / NRRL 194 / M139) (Aspergillus nidulans)).